A 436-amino-acid chain; its full sequence is MSMFLDTAKIQVKAGNGGDGMVAFRREKYVPNGGPWGGDGGRGGNVVFVVDEGLRTLMDFRYNRHFKAQSGEKGMTKGMHGRGAEDLIVRVPQGTTVRDAETGKVLTDLVENGQEFIVARGGRGGRGNIRFATPKNPAPEISENGEPGQERELLLELKVLADVGLVGFPSVGKSTLLSVITAAKPKIGAYHFTTIVPNLGMVRTHSGESFAVADLPGLIEGASQGVGLGTQFLRHIERTRVILHVIDMSASEGRDPYEDYLAINKELESYNLRLMERPQIIVANKMDMPDSAENLKIFKEKLAANYDEFAELPQIFPISSLTKQGLATLLDATAELLDKTPEFLLYDESEMEEEAYYGFDEEAPAFEISRDDDATWVLSGDKLEKLFSMTNFDRDEAVMKFARQLRGMGVDEALRDRGAKDGDLVRIGKFEFEFVD.

Residues 2 to 160 form the Obg domain; it reads SMFLDTAKIQ…RELLLELKVL (159 aa). Residues 161 to 338 enclose the OBG-type G domain; sequence ADVGLVGFPS…LLDATAELLD (178 aa). Residues 167 to 174, 192 to 196, 214 to 217, 284 to 287, and 319 to 321 each bind GTP; these read GFPSVGKS, FTTIV, DLPG, NKMD, and SSL. Mg(2+) contacts are provided by S174 and T194. Residues 358–436 form the OCT domain; it reads GFDEEAPAFE…IGKFEFEFVD (79 aa).

Belongs to the TRAFAC class OBG-HflX-like GTPase superfamily. OBG GTPase family. Monomer. It depends on Mg(2+) as a cofactor.

It is found in the cytoplasm. Functionally, an essential GTPase which binds GTP, GDP and possibly (p)ppGpp with moderate affinity, with high nucleotide exchange rates and a fairly low GTP hydrolysis rate. Plays a role in control of the cell cycle, stress response, ribosome biogenesis and in those bacteria that undergo differentiation, in morphogenesis control. The protein is GTPase Obg of Streptococcus sanguinis (strain SK36).